Here is a 661-residue protein sequence, read N- to C-terminus: MSDQFTSIQWDRTEPEGDVPGDSNDHSQVQINSSINLIEEDQGQEQEQDDLVTTNTVVRGGNDSDSNPNEQIPPRDVYIRSKVSQPLKESDGQNFYISYLIETETNEPGLAKTKLKVRRRFSDSNFLYNCLANDFPTSIIPPLPNKQRLEYIKGDRFGEYFTTKRSIALNNFLNRISKHPLLKQAKIYHIFLEDSVNWNTFKQNLKISSNPNSTVGGGSTTSANANGELDSFSDYIMNAFKKPTYESENAKEFQEITDKSNKLQENINKIDKIYQRVVKRQSEISEDFRLFGDEFKKLNQILTEGSDTQFDKELSQQFTSFSENIYQISYDSFKLTRQVDLHYLTSLKDLDHYISQIKNMIKFKDSKLLDYEMLQNYLNKAIAEKNHLMNGNNVSGSDGAMNFISKKIGSLRGKTPGQTYSSGNETNDRINKLNEKIEFLEREVKETFELFHTFEKNLITEYQLFDRIKNDEITTNLHELSQYYLDYYNSVVNHWNDVEIPHSEHLTDELHVLQQSQLRKNLENISIDPKLDVNSKLFEHDDVRLNNDHIRSDLRSIKSQERKNEQVHKQDQEQGEEQEHEQDQVQNQEQEQEPEELSREEAEVLETPVQAQEQEQQEPEELHASQTESHTQSEPQNDNQHNFDDDGSDEGLVDVEGLEQW.

Composition is skewed to polar residues over residues 1-10 (MSDQFTSIQW) and 26-36 (HSQVQINSSIN). 2 disordered regions span residues 1–49 (MSDQ…QEQD) and 56–75 (TVVR…IPPR). The span at 38–49 (IEEDQGQEQEQD) shows a compositional bias: acidic residues. Residues 56 to 70 (TVVRGGNDSDSNPNE) show a composition bias toward polar residues. In terms of domain architecture, PX spans 77–198 (VYIRSKVSQP…HIFLEDSVNW (122 aa)). The a 1,2-diacyl-sn-glycero-3-phospho-(1D-myo-inositol-3-phosphate) site is built by arginine 120, serine 122, lysine 146, and arginine 165. The segment covering 554–572 (LRSIKSQERKNEQVHKQDQ) has biased composition (basic and acidic residues). A disordered region spans residues 554–661 (LRSIKSQERK…LVDVEGLEQW (108 aa)). Polar residues predominate over residues 624 to 640 (ASQTESHTQSEPQNDNQ). Residues 645–661 (DDGSDEGLVDVEGLEQW) show a composition bias toward acidic residues.

The protein belongs to the sorting nexin family.

It is found in the cytoplasm. It localises to the membrane. The protein localises to the vacuole membrane. Functionally, sorting nexin involved in the separation or division of vacuoles throughout the entire life cycle of the cells. Required for glucose-induced micropexophagy and ethanol-induced macropexophagy. Involved in the fusion between the pexophagosome and the vacuole. Also involved in the separation or division of vacuoles throughout the entire life cycle of the cells. This Komagataella pastoris (Yeast) protein is Sorting nexin-4 (SNX4).